Here is a 131-residue protein sequence, read N- to C-terminus: MRHQKRTHKLGRDTQHRSALIANLAKELIEHKRIKTTLIKAKALRPFAEKLITLAKKGTLHARRLVVRKIHSKKAARLLFKEIAPQMQGRIGGYVRIYKMGNRLSDGAKMALIEWTEGQVPVENQKAQKAE.

Belongs to the bacterial ribosomal protein bL17 family. As to quaternary structure, part of the 50S ribosomal subunit. Contacts protein L32.

This chain is Large ribosomal subunit protein bL17, found in Methylacidiphilum infernorum (isolate V4) (Methylokorus infernorum (strain V4)).